A 320-amino-acid polypeptide reads, in one-letter code: Bifunctional ligase/repressor BirA (320 aa).

Positions 22–41 (GEQLGERLGMSRAAINKHIQ) form a DNA-binding region, H-T-H motif. Residues 66–254 (LLDADRIHSQ…KLRAALELFE (189 aa)) enclose the BPL/LPL catalytic domain. Residues 89–91 (STN), glutamine 112, 116–118 (RGR), and lysine 183 contribute to the biotin site.

Belongs to the biotin--protein ligase family.

The catalysed reaction is biotin + L-lysyl-[protein] + ATP = N(6)-biotinyl-L-lysyl-[protein] + AMP + diphosphate + H(+). Acts both as a biotin--[acetyl-CoA-carboxylase] ligase and a biotin-operon repressor. In the presence of ATP, BirA activates biotin to form the BirA-biotinyl-5'-adenylate (BirA-bio-5'-AMP or holoBirA) complex. HoloBirA can either transfer the biotinyl moiety to the biotin carboxyl carrier protein (BCCP) subunit of acetyl-CoA carboxylase, or bind to the biotin operator site and inhibit transcription of the operon. The protein is Bifunctional ligase/repressor BirA of Salmonella typhimurium (strain LT2 / SGSC1412 / ATCC 700720).